A 489-amino-acid polypeptide reads, in one-letter code: Tyrosine-protein phosphatase MSG5 (489 aa).

A compositionally biased stretch (basic and acidic residues) spans 1–18; that stretch reads MQFHSDKQHLDSKTDIDF. A disordered region spans residues 1 to 30; it reads MQFHSDKQHLDSKTDIDFKPNSPRSLQNRN. Residues Ser-22, Ser-98, and Ser-151 each carry the phosphoserine modification. Residue Thr-178 is modified to Phosphothreonine. In terms of domain architecture, Tyrosine-protein phosphatase spans 233–375; it reads GPLLVLPPNL…LMEWGTMLSK (143 aa). Cys-319 (phosphocysteine intermediate) is an active-site residue. Disordered regions lie at residues 375 to 401 and 419 to 489; these read KNSPGEEGETVHMPEEDDIGNNEVSST and LSSS…MFLP. A compositionally biased stretch (low complexity) spans 419 to 450; sequence LSSSPNDSSVNSSEVTPRTPATLTGARTALAT. Positions 451–460 are enriched in basic and acidic residues; that stretch reads ERGEDDEHCK.

The protein belongs to the protein-tyrosine phosphatase family. Non-receptor class dual specificity subfamily.

It carries out the reaction O-phospho-L-tyrosyl-[protein] + H2O = L-tyrosyl-[protein] + phosphate. Its function is as follows. Dual specificity phosphatase that dephosphorylates MAP kinase FUS3 on both a Tyr and a Ser or Thr. Has a role in adaptation to pheromone. The protein is Tyrosine-protein phosphatase MSG5 (MSG5) of Saccharomyces cerevisiae (strain ATCC 204508 / S288c) (Baker's yeast).